A 204-amino-acid chain; its full sequence is Methylthioribulose-1-phosphate dehydratase (204 aa).

2 residues coordinate Zn(2+): His94 and His96.

Belongs to the aldolase class II family. MtnB subfamily. Requires Zn(2+) as cofactor.

The enzyme catalyses 5-(methylsulfanyl)-D-ribulose 1-phosphate = 5-methylsulfanyl-2,3-dioxopentyl phosphate + H2O. The protein operates within amino-acid biosynthesis; L-methionine biosynthesis via salvage pathway; L-methionine from S-methyl-5-thio-alpha-D-ribose 1-phosphate: step 2/6. Catalyzes the dehydration of methylthioribulose-1-phosphate (MTRu-1-P) into 2,3-diketo-5-methylthiopentyl-1-phosphate (DK-MTP-1-P). The sequence is that of Methylthioribulose-1-phosphate dehydratase from Pseudomonas savastanoi pv. phaseolicola (strain 1448A / Race 6) (Pseudomonas syringae pv. phaseolicola (strain 1448A / Race 6)).